The chain runs to 233 residues: uncharacterized protein (233 aa).

The segment at Leu-190–Phe-233 is disordered. Residues Ser-195–Lys-212 show a composition bias toward acidic residues.

The protein belongs to the asfivirus DP238L family.

This is an uncharacterized protein from Ornithodoros (relapsing fever ticks).